A 961-amino-acid polypeptide reads, in one-letter code: IQ motif and SEC7 domain-containing protein 1 (961 aa).

A disordered region spans residues 21-113 (SGVEGEAPSS…SLSESYELSS (93 aa)). A compositionally biased stretch (polar residues) spans 29–38 (SSETGTSLDS). 3 positions are modified to phosphoserine: Ser-88, Ser-104, and Ser-106. Residues 133 to 162 (TRHAARTIQTAFRQYQMNKNFERLRSSMSE) enclose the IQ domain. Residues Ser-179, Ser-247, and Ser-251 each carry the phosphoserine modification. 3 disordered regions span residues 263-291 (SEEVPASDTARARDTEPKPGLHGMDHRKL), 310-332 (LSPPLPLSQAGDRPSSTESDLRL), and 347-515 (KEDK…DSPA). Residues 272-291 (ARARDTEPKPGLHGMDHRKL) are compositionally biased toward basic and acidic residues. Basic and acidic residues-rich tracts occupy residues 364–374 (ERPEPRLRVEH) and 428–444 (LPREEPELRPRPPRPLE). Low complexity predominate over residues 469-487 (DSINSTSNSNDTINCSSES). Phosphoserine is present on residues Ser-510 and Ser-513. In terms of domain architecture, SEC7 spans 515 to 708 (AFSNDVIRKR…IGIYERIRKR (194 aa)). In terms of domain architecture, PH spans 772 to 864 (HQREIFLFND…LRESVAEVQE (93 aa)). Residues 846–877 (QDRKKFTDDLRESVAEVQEMEKHRIESELEKQ) adopt a coiled-coil conformation. Residue Ser-890 is modified to Phosphoserine. The residue at position 909 (Tyr-909) is a Phosphotyrosine. The segment at 920 to 961 (LSSSLRDLSEAGKRGRRSSAGSLESNVEFQPFQPPQPPVLCS) is disordered. Phosphoserine occurs at positions 922 and 923. The segment covering 938–947 (SAGSLESNVE) has biased composition (polar residues). The segment covering 951 to 961 (FQPPQPPVLCS) has biased composition (pro residues).

Belongs to the BRAG family. As to quaternary structure, interacts with ARF1 and ARF6. Interacts with GRIA2; the interaction is required for ARF6 activation. As to expression, expressed in hippocampus.

The protein localises to the cytoplasm. The protein resides in the nucleus. Its subcellular location is the postsynaptic density. It localises to the cytoplasmic vesicle. It is found in the secretory vesicle. The protein localises to the synaptic vesicle. Guanine nucleotide exchange factor for ARF1 and ARF6. Guanine nucleotide exchange factor activity is enhanced by lipid binding. Accelerates GTP binding by ARFs of all three classes. Guanine nucleotide exchange protein for ARF6, mediating internalization of beta-1 integrin. Involved in neuronal development. In neurons, plays a role in the control of vesicle formation by endocytoc cargo. Upon long term depression, interacts with GRIA2 and mediates the activation of ARF6 to internalize synaptic AMPAR receptors. This chain is IQ motif and SEC7 domain-containing protein 1 (Iqsec1), found in Mus musculus (Mouse).